The primary structure comprises 1055 residues: Cellulose synthase A catalytic subunit 9 [UDP-forming] (1055 aa).

Residues 1 to 268 (MEASAGLVAG…ASSKVNPYRM (268 aa)) are Cytoplasmic-facing. Zn(2+)-binding residues include Cys37, Cys40, Cys56, Cys59, Cys64, Cys67, Cys79, and Cys82. The RING-type; degenerate zinc finger occupies 37–83 (CEICGDEVGRTVDGDLFVACNECGFPVCRPCYEYERREGTQNCPQCK). A helical membrane pass occupies residues 269-289 (VIILRLVVLGFFLRYRILHPV). Residues 290-291 (PD) are Extracellular-facing. A helical transmembrane segment spans residues 292 to 312 (AIPLWLTSIICEIWFAVSWIL). Residues 313-831 (DQFPKWYPID…LERFSYINTT (519 aa)) lie on the Cytoplasmic side of the membrane. Positions 351, 357, 358, and 387 each coordinate UDP-alpha-D-glucose. Asp387 is a catalytic residue. Positions 439-468 (NFVQERRAMKREYEEFKVRINALVAKAQKV) form a coiled coil. Lys528 lines the UDP-alpha-D-glucose pocket. Residues Lys529 and Asp553 each contribute to the Mn(2+) site. Asp753 is an active-site residue. A helical transmembrane segment spans residues 832-852 (IYPFTSLPLLAYCTLPAVCLL). The Extracellular portion of the chain corresponds to 853-860 (TGKFIMPP). The helical transmembrane segment at 861–881 (ISTFASLFFIALFISIFATGI) threads the bilayer. Residues 882-899 (LEMRWSGVSIEEWWRNEQ) lie on the Cytoplasmic side of the membrane. Residues 900–920 (FWVIGGVSAHLFAVVQGLLKV) form a helical membrane-spanning segment. Residues 921 to 951 (LAGIDTNFTVTSKATGDEDDEFAELYAFKWT) are Extracellular-facing. N-linked (GlcNAc...) asparagine glycosylation is present at Asn927. Residues 952–972 (TLLIPPTTLLILNIIGVVAGV) traverse the membrane as a helical segment. Residues 973 to 983 (SDAINNGSEAW) lie on the Cytoplasmic side of the membrane. The helical transmembrane segment at 984–1004 (GPLFGKLFFAFWVIVHLYPFL) threads the bilayer. The Extracellular portion of the chain corresponds to 1005–1013 (KGLMGRQNR). A helical transmembrane segment spans residues 1014 to 1034 (TPTIVVIWSVLLASIFSLLWV). Topologically, residues 1035–1055 (RIDPFTIKARGPDVRQCGINC) are cytoplasmic.

Belongs to the glycosyltransferase 2 family. Plant cellulose synthase subfamily. Mn(2+) serves as cofactor. It depends on Zn(2+) as a cofactor.

The protein localises to the cell membrane. It catalyses the reaction [(1-&gt;4)-beta-D-glucosyl](n) + UDP-alpha-D-glucose = [(1-&gt;4)-beta-D-glucosyl](n+1) + UDP + H(+). The protein operates within glycan metabolism; plant cellulose biosynthesis. Catalytic subunit of cellulose synthase terminal complexes ('rosettes'), required for beta-1,4-glucan microfibril crystallization, a major mechanism of the cell wall formation. Involved in the secondary cell wall formation. This chain is Cellulose synthase A catalytic subunit 9 [UDP-forming] (CESA9), found in Oryza sativa subsp. indica (Rice).